We begin with the raw amino-acid sequence, 606 residues long: UPF0329 protein ECU06_0090 (606 aa).

Residues 317–401 (KKEEERREEE…SREACSKERN (85 aa)) are disordered. A compositionally biased stretch (basic and acidic residues) spans 328-353 (EKKRKEEVVQRNVEELLRGEEEEKKG). Over residues 354–367 (AKAKRKSKKKKKGS) the composition is skewed to basic residues. The segment covering 381–401 (SENREAQEMEDSREACSKERN) has biased composition (basic and acidic residues).

Belongs to the UPF0329 family.

The polypeptide is UPF0329 protein ECU06_0090 (Encephalitozoon cuniculi (strain GB-M1) (Microsporidian parasite)).